The sequence spans 143 residues: Large ribosomal subunit protein uL11 (143 aa).

Belongs to the universal ribosomal protein uL11 family. Part of the ribosomal stalk of the 50S ribosomal subunit. Interacts with L10 and the large rRNA to form the base of the stalk. L10 forms an elongated spine to which L12 dimers bind in a sequential fashion forming a multimeric L10(L12)X complex. Post-translationally, one or more lysine residues are methylated.

Its function is as follows. Forms part of the ribosomal stalk which helps the ribosome interact with GTP-bound translation factors. This chain is Large ribosomal subunit protein uL11, found in Aromatoleum aromaticum (strain DSM 19018 / LMG 30748 / EbN1) (Azoarcus sp. (strain EbN1)).